A 29-amino-acid chain; its full sequence is Cyclotide psyleio B (29 aa).

Positions 1–29 (GDLPICGETCFGGTCNTPGCVCAWPVCNR) form a cross-link, cyclopeptide (Gly-Arg). Disulfide bonds link Cys-6/Cys-20, Cys-10/Cys-22, and Cys-15/Cys-27.

This is a cyclic peptide.

Its function is as follows. Probably participates in a plant defense mechanism. This chain is Cyclotide psyleio B, found in Psychotria brachyceras.